The primary structure comprises 194 residues: Lachesicidin (194 aa).

A signal peptide spans 1 to 22; that stretch reads MQGFFWKTWLVLAVCGTPASLA. Residues 23–160 constitute a propeptide that is removed on maturation; sequence HRPLSYGEAL…DEEKDQPKRV (138 aa). Intrachain disulfides connect cysteine 79-cysteine 90 and cysteine 101-cysteine 118. The segment covering 125 to 154 has biased composition (acidic residues); that stretch reads EEEEEEEEEEQKAEAENDEEVEKEKEDEEK. A disordered region spans residues 125-157; sequence EEEEEEEEEEQKAEAENDEEVEKEKEDEEKDQP.

It belongs to the cathelicidin family. Expressed by the venom gland.

The protein resides in the secreted. Its subcellular location is the target cell membrane. In terms of biological role, potent antimicrobial peptide against Gram-negative and Gram-positive bacteria. Adopts an amphipathic alpha helical conformation, that may allow to partition into the target membrane. Low hemolytic activities have been observed on mammalian cells. This Lachesis muta rhombeata (Bushmaster) protein is Lachesicidin.